Here is a 152-residue protein sequence, read N- to C-terminus: MFRGATLVNLDSKGRLSVPTRYREELLGNAAGQMVCTIDIHHPCLLLYPLPEWEIIEHKLSRLSSMNPVERRVQRLLLGHASECQLDNAGRLLIAPVLRQHAGLTKEVMLVGQFNKFELWDETTWHQQVREDIDAEQSITENLSERLQDLSL.

SpoVT-AbrB domains are found at residues 5 to 52 (ATLV…PLPE) and 81 to 124 (ASEC…DETT).

This sequence belongs to the MraZ family. As to quaternary structure, forms oligomers.

Its subcellular location is the cytoplasm. It is found in the nucleoid. In terms of biological role, negatively regulates its own expression and that of the subsequent genes in the proximal part of the division and cell wall (dcw) gene cluster. Acts by binding directly to DNA. May also regulate the expression of genes outside the dcw cluster. The protein is Transcriptional regulator MraZ of Escherichia fergusonii (strain ATCC 35469 / DSM 13698 / CCUG 18766 / IAM 14443 / JCM 21226 / LMG 7866 / NBRC 102419 / NCTC 12128 / CDC 0568-73).